The sequence spans 359 residues: tRNA N6-adenosine threonylcarbamoyltransferase (359 aa).

Fe cation-binding residues include histidine 115 and histidine 119. Substrate contacts are provided by residues 137–141 (LVSGG), aspartate 170, glycine 183, and asparagine 283. Position 311 (aspartate 311) interacts with Fe cation. A disordered region spans residues 328 to 359 (APDSLDIAPRSRWPLDEKSAPVFGTGRRGAKA).

Belongs to the KAE1 / TsaD family. Requires Fe(2+) as cofactor.

Its subcellular location is the cytoplasm. It carries out the reaction L-threonylcarbamoyladenylate + adenosine(37) in tRNA = N(6)-L-threonylcarbamoyladenosine(37) in tRNA + AMP + H(+). Functionally, required for the formation of a threonylcarbamoyl group on adenosine at position 37 (t(6)A37) in tRNAs that read codons beginning with adenine. Is involved in the transfer of the threonylcarbamoyl moiety of threonylcarbamoyl-AMP (TC-AMP) to the N6 group of A37, together with TsaE and TsaB. TsaD likely plays a direct catalytic role in this reaction. This Brucella suis (strain ATCC 23445 / NCTC 10510) protein is tRNA N6-adenosine threonylcarbamoyltransferase.